The primary structure comprises 161 residues: Ribonuclease P protein component (161 aa).

It belongs to the RnpA family. In terms of assembly, consists of a catalytic RNA component (M1 or rnpB) and a protein subunit.

It carries out the reaction Endonucleolytic cleavage of RNA, removing 5'-extranucleotides from tRNA precursor.. In terms of biological role, RNaseP catalyzes the removal of the 5'-leader sequence from pre-tRNA to produce the mature 5'-terminus. It can also cleave other RNA substrates such as 4.5S RNA. The protein component plays an auxiliary but essential role in vivo by binding to the 5'-leader sequence and broadening the substrate specificity of the ribozyme. The polypeptide is Ribonuclease P protein component (Helicobacter pylori (strain Shi470)).